Consider the following 304-residue polypeptide: Dihydroorotate dehydrogenase B (NAD(+)), catalytic subunit (304 aa).

Residues Ser21 and 45–46 (KA) each bind FMN. Residues Lys45 and 69-73 (NAIGL) contribute to the substrate site. Residues Asn99 and Asn127 each contribute to the FMN site. Asn127 serves as a coordination point for substrate. Residue Cys130 is the Nucleophile of the active site. 2 residues coordinate FMN: Lys165 and Ile191. Position 192–193 (192–193 (NT)) interacts with substrate. Residues Gly217, 243–244 (GG), and 265–266 (GT) contribute to the FMN site.

This sequence belongs to the dihydroorotate dehydrogenase family. Type 1 subfamily. As to quaternary structure, heterotetramer of 2 PyrK and 2 PyrD type B subunits. The cofactor is FMN.

It is found in the cytoplasm. It catalyses the reaction (S)-dihydroorotate + NAD(+) = orotate + NADH + H(+). The protein operates within pyrimidine metabolism; UMP biosynthesis via de novo pathway; orotate from (S)-dihydroorotate (NAD(+) route): step 1/1. Functionally, catalyzes the conversion of dihydroorotate to orotate with NAD(+) as electron acceptor. This Listeria monocytogenes serotype 4b (strain CLIP80459) protein is Dihydroorotate dehydrogenase B (NAD(+)), catalytic subunit (pyrD).